The following is a 66-amino-acid chain: Large ribosomal subunit protein bL33c (66 aa).

It belongs to the bacterial ribosomal protein bL33 family.

It is found in the plastid. It localises to the chloroplast. The chain is Large ribosomal subunit protein bL33c from Oenothera argillicola (Appalachian evening primrose).